Reading from the N-terminus, the 248-residue chain is Phosphomannomutase (248 aa).

D12 functions as the Nucleophile in the catalytic mechanism. The Mg(2+) site is built by D12 and D14. The Proton donor/acceptor role is filled by D14. 6 residues coordinate alpha-D-mannose 1-phosphate: R21, R123, R134, R141, S179, and D181. The Mg(2+) site is built by D207, F219, and T224.

The protein belongs to the eukaryotic PMM family. In terms of assembly, homodimer. It depends on Mg(2+) as a cofactor.

The protein resides in the cytoplasm. It catalyses the reaction alpha-D-mannose 1-phosphate = D-mannose 6-phosphate. It participates in nucleotide-sugar biosynthesis; GDP-alpha-D-mannose biosynthesis; alpha-D-mannose 1-phosphate from D-fructose 6-phosphate: step 2/2. Functionally, catalyzes the interconversion of mannose-6-phosphate to mannose-1-phosphate, the precursor for the synthesis of GDP-mannose. GDP-mannose is an essential sugar nucleotide for the synthesis of D-mannose-containing cell wall polysaccharides (galactomannans and glucomannans), glycolipids, glycoproteins and the antioxidant L-ascorbate. This Spinacia oleracea (Spinach) protein is Phosphomannomutase.